We begin with the raw amino-acid sequence, 598 residues long: mRNA-capping enzyme (598 aa).

The tract at residues 1–215 (MSQTGAPPRW…GSASAPASEP (215 aa)) is TPase. The region spanning 25 to 183 (LPMKTMLGPR…FRRYGDVEDA (159 aa)) is the Tyrosine-protein phosphatase domain. Catalysis depends on Cys126, which acts as the Phosphocysteine intermediate. The disordered stretch occupies residues 186–227 (APPLPEWCFDEDEEEDGEEDGSASAPASEPSSSHTGQSKKKK). Residues 193–206 (CFDEDEEEDGEEDG) show a composition bias toward acidic residues. A compositionally biased stretch (low complexity) spans 207-218 (SASAPASEPSSS). Residues 233–598 (GAVFLEGVSV…PKRSANSIPQ (366 aa)) form a GTase region. Catalysis depends on Lys298, which acts as the N6-GMP-lysine intermediate. GTP-binding positions include Arg303, Arg319, 347–349 (DGE), 462–464 (KWK), and 532–537 (RQRVDK). The tract at residues 575-598 (RKNPADSDLMPPPPPKRSANSIPQ) is disordered.

The protein in the N-terminal section; belongs to the non-receptor class of the protein-tyrosine phosphatase family. This sequence in the C-terminal section; belongs to the eukaryotic GTase family.

Its subcellular location is the nucleus. It carries out the reaction a 5'-end triphospho-ribonucleoside in mRNA + H2O = a 5'-end diphospho-ribonucleoside in mRNA + phosphate + H(+). It catalyses the reaction a 5'-end diphospho-ribonucleoside in mRNA + GTP + H(+) = a 5'-end (5'-triphosphoguanosine)-ribonucleoside in mRNA + diphosphate. Functionally, bifunctional mRNA-capping enzyme exhibiting RNA 5'-triphosphate monophosphatase activity in the N-terminal part and mRNA guanylyltransferase activity in the C-terminal part. Catalyzes the first two steps of cap formation: by removing the gamma-phosphate from the 5'-triphosphate end of nascent mRNA to yield a diphosphate end, and by transferring the GMP moiety of GTP to the 5'-diphosphate terminus of RNA via a covalent enzyme-GMP reaction intermediate. This is mRNA-capping enzyme (rngtt) from Danio rerio (Zebrafish).